A 256-amino-acid polypeptide reads, in one-letter code: 6-carboxyhexanoate--CoA ligase (256 aa).

Belongs to the BioW family. Homodimer. Requires Mg(2+) as cofactor.

It carries out the reaction heptanedioate + ATP + CoA = 6-carboxyhexanoyl-CoA + AMP + diphosphate. It functions in the pathway metabolic intermediate metabolism; pimeloyl-CoA biosynthesis; pimeloyl-CoA from pimelate: step 1/1. Functionally, catalyzes the transformation of pimelate into pimeloyl-CoA with concomitant hydrolysis of ATP to AMP. This is 6-carboxyhexanoate--CoA ligase from Bacillus velezensis (strain DSM 23117 / BGSC 10A6 / LMG 26770 / FZB42) (Bacillus amyloliquefaciens subsp. plantarum).